Consider the following 83-residue polypeptide: U5-theraphotoxin-Hs1d (83 aa).

A signal peptide spans 1–21 (MKTSMFLTLTGLVLLFVVCYA). Residues 22–49 (SESEEKEFPKELLSSIFAADSDFKVEER) constitute a propeptide that is removed on maturation. Cystine bridges form between Cys51-Cys63, Cys56-Cys68, and Cys62-Cys75.

This sequence belongs to the neurotoxin 10 (Hwtx-1) family. 51 (Hntx-8) subfamily. Hntx-8 sub-subfamily. As to expression, expressed by the venom gland.

It localises to the secreted. In terms of biological role, agglutinates erythrocytes. In Cyriopagopus schmidti (Chinese bird spider), this protein is U5-theraphotoxin-Hs1d.